We begin with the raw amino-acid sequence, 486 residues long: Cardiolipin synthase A (486 aa).

Transmembrane regions (helical) follow at residues 3-23 (TFYT…IAGV) and 38-58 (MAWL…YLSF). PLD phosphodiesterase domains follow at residues 219–246 (MDLR…VDPR) and 399–426 (EGGL…DMRS). Active-site residues include histidine 224, lysine 226, aspartate 231, histidine 404, lysine 406, and aspartate 411.

Belongs to the phospholipase D family. Cardiolipin synthase subfamily. ClsA sub-subfamily.

The protein resides in the cell inner membrane. The enzyme catalyses 2 a 1,2-diacyl-sn-glycero-3-phospho-(1'-sn-glycerol) = a cardiolipin + glycerol. In terms of biological role, catalyzes the reversible phosphatidyl group transfer from one phosphatidylglycerol molecule to another to form cardiolipin (CL) (diphosphatidylglycerol) and glycerol. In Yersinia pseudotuberculosis serotype O:1b (strain IP 31758), this protein is Cardiolipin synthase A.